The primary structure comprises 336 residues: Ketol-acid reductoisomerase (NADP(+)) 1 (336 aa).

A KARI N-terminal Rossmann domain is found at 2–181; it reads AKVYYEKDVT…GATRAGVLET (180 aa). Residues 25–28, Arg48, Ser52, and 82–85 each bind NADP(+); these read YGSQ and DELQ. His107 is a catalytic residue. Position 133 (Gly133) interacts with NADP(+). Residues 182–327 form the KARI C-terminal knotted domain; sequence TFKEETETDL…RKLREMMPFV (146 aa). Residues Asp190, Glu194, Glu226, and Glu230 each contribute to the Mg(2+) site. Substrate is bound at residue Ser251.

It belongs to the ketol-acid reductoisomerase family. Requires Mg(2+) as cofactor.

It catalyses the reaction (2R)-2,3-dihydroxy-3-methylbutanoate + NADP(+) = (2S)-2-acetolactate + NADPH + H(+). The enzyme catalyses (2R,3R)-2,3-dihydroxy-3-methylpentanoate + NADP(+) = (S)-2-ethyl-2-hydroxy-3-oxobutanoate + NADPH + H(+). Its pathway is amino-acid biosynthesis; L-isoleucine biosynthesis; L-isoleucine from 2-oxobutanoate: step 2/4. It functions in the pathway amino-acid biosynthesis; L-valine biosynthesis; L-valine from pyruvate: step 2/4. In terms of biological role, involved in the biosynthesis of branched-chain amino acids (BCAA). Catalyzes an alkyl-migration followed by a ketol-acid reduction of (S)-2-acetolactate (S2AL) to yield (R)-2,3-dihydroxy-isovalerate. In the isomerase reaction, S2AL is rearranged via a Mg-dependent methyl migration to produce 3-hydroxy-3-methyl-2-ketobutyrate (HMKB). In the reductase reaction, this 2-ketoacid undergoes a metal-dependent reduction by NADPH to yield (R)-2,3-dihydroxy-isovalerate. This chain is Ketol-acid reductoisomerase (NADP(+)) 1, found in Bacillus cereus (strain ATCC 14579 / DSM 31 / CCUG 7414 / JCM 2152 / NBRC 15305 / NCIMB 9373 / NCTC 2599 / NRRL B-3711).